A 155-amino-acid chain; its full sequence is Protein LOL2 (155 aa).

Methionine 1 is subject to N-acetylmethionine. Residues 1–35 (MEEIQQQTQKEEQKHREEEEEEEEGPPPGWESAVL) are disordered. 2 putative zinc finger regions span residues 60–90 (QMVC…VNLV) and 98–128 (QVNC…VTDI). Residues 130–155 (ENNKRPPWSEQQGPLKSLSSLRRAEN) form a disordered region. Polar residues predominate over residues 138–149 (SEQQGPLKSLSS).

Its subcellular location is the nucleus. Functionally, putative zinc finger that may be involved in programmed cell death and defense response. This Arabidopsis thaliana (Mouse-ear cress) protein is Protein LOL2 (LOL2).